The following is a 370-amino-acid chain: Phenylalanine dehydrogenase (370 aa).

Residue Arg-44 coordinates NAD(+). Lys-68 is a binding site for L-phenylalanine. Catalysis depends on Lys-80, which acts as the Proton donor/acceptor. 114 to 115 (TD) is a binding site for L-phenylalanine. Residues Asp-115, Ser-146, Thr-150, 180–186 (GLGKVGF), 203–204 (DV), 243–244 (AI), and 264–266 (AAN) each bind NAD(+). An L-phenylalanine-binding site is contributed by Asn-266.

This sequence belongs to the Glu/Leu/Phe/Val dehydrogenases family.

It carries out the reaction L-phenylalanine + NAD(+) + H2O = 3-phenylpyruvate + NH4(+) + NADH + H(+). The protein operates within amino-acid biosynthesis; L-phenylalanine biosynthesis; L-phenylalanine from phenylpyruvate (PDH route): step 1/1. Catalyzes the reversible NAD(+)-dependent oxidative deamination of L-phenylalanine to phenylpyruvate. This is Phenylalanine dehydrogenase from Caldalkalibacillus thermarum (strain TA2.A1).